Reading from the N-terminus, the 70-residue chain is MAIGVNQLLIILVIIVLLFGAKKIPELAKGLGKGIKSFKAEMEDDKPIEKVEKKGDDVVDAKVEETTKNA.

A helical transmembrane segment spans residues 1–21 (MAIGVNQLLIILVIIVLLFGA).

Belongs to the TatA/E family. As to quaternary structure, the Tat system comprises two distinct complexes: a TatABC complex, containing multiple copies of TatA, TatB and TatC subunits, and a separate TatA complex, containing only TatA subunits. Substrates initially bind to the TatABC complex, which probably triggers association of the separate TatA complex to form the active translocon.

It localises to the cell inner membrane. Functionally, part of the twin-arginine translocation (Tat) system that transports large folded proteins containing a characteristic twin-arginine motif in their signal peptide across membranes. TatA could form the protein-conducting channel of the Tat system. In Campylobacter curvus (strain 525.92), this protein is Sec-independent protein translocase protein TatA.